Reading from the N-terminus, the 320-residue chain is Protoheme IX farnesyltransferase (320 aa).

The tract at residues 1–24 (MSMITERPVSDPAGQSVSATGDGA) is disordered. Transmembrane regions (helical) follow at residues 33–55 (AVVAAYVALTKPRIVELLLVTTV), 68–88 (LWLMAVVLVGGSLAAGAASVL), 117–137 (NALIFGLVLATVSVTLLAVFT), 140–160 (LAAGLTLAAILYYDLVYTAWL), 183–203 (WAAVTGSLAPAAWALFGVVFF), 241–261 (ILVFAWLTVLVSLVTWPLGAG), 262–282 (MGPIYGLPTLVVGVIFLVEAH), and 300–320 (FHWSTTYLTVVFAAVALDALI).

This sequence belongs to the UbiA prenyltransferase family. Protoheme IX farnesyltransferase subfamily.

The protein localises to the cell membrane. It catalyses the reaction heme b + (2E,6E)-farnesyl diphosphate + H2O = Fe(II)-heme o + diphosphate. It functions in the pathway porphyrin-containing compound metabolism; heme O biosynthesis; heme O from protoheme: step 1/1. Functionally, converts heme B (protoheme IX) to heme O by substitution of the vinyl group on carbon 2 of heme B porphyrin ring with a hydroxyethyl farnesyl side group. This is Protoheme IX farnesyltransferase from Salinispora tropica (strain ATCC BAA-916 / DSM 44818 / JCM 13857 / NBRC 105044 / CNB-440).